Reading from the N-terminus, the 231-residue chain is 2,3-bisphosphoglycerate-dependent phosphoglycerate mutase (231 aa).

Residues 8-15 (RHGESEWN), 21-22 (TG), Arg-60, 87-90 (ERHY), Lys-98, 114-115 (RR), and 183-184 (GN) contribute to the substrate site. The active-site Tele-phosphohistidine intermediate is the His-9. Glu-87 functions as the Proton donor/acceptor in the catalytic mechanism.

Belongs to the phosphoglycerate mutase family. BPG-dependent PGAM subfamily.

The enzyme catalyses (2R)-2-phosphoglycerate = (2R)-3-phosphoglycerate. It functions in the pathway carbohydrate degradation; glycolysis; pyruvate from D-glyceraldehyde 3-phosphate: step 3/5. Functionally, catalyzes the interconversion of 2-phosphoglycerate and 3-phosphoglycerate. The chain is 2,3-bisphosphoglycerate-dependent phosphoglycerate mutase from Streptococcus pyogenes serotype M49 (strain NZ131).